The primary structure comprises 1025 residues: Collagen alpha-1(VI) chain (1025 aa).

Residues 1–19 (MRLAHALLPLLLQACWVAT) form the signal peptide. Residues 20-255 (QDIQGSKAIA…CCSFECQAAR (236 aa)) form an N-terminal globular domain region. Residues 36 to 234 (DLFFVLDTSE…EVISQTIDTI (199 aa)) enclose the VWFA 1 domain. The N-linked (GlcNAc...) asparagine glycan is linked to asparagine 211. The interval 252 to 588 (QAARGPPGPR…QGPPGHVGPP (337 aa)) is disordered. Residues 256-591 (GPPGPRGDPG…PGHVGPPGPD (336 aa)) form a triple-helical region region. The Cell attachment site signature appears at 261–263 (RGD). Composition is skewed to basic and acidic residues over residues 267–284 (EGER…EAGD) and 300–333 (KGEK…DGMK). 2 short sequence motifs (cell attachment site) span residues 441 to 443 (RGD) and 477 to 479 (RGD). Asparagine 515 and asparagine 536 each carry an N-linked (GlcNAc...) asparagine glycan. Acidic residues predominate over residues 549–559 (GEVGDPGEDNN). Positions 578 to 588 (PQGPPGHVGPP) are enriched in pro residues. The interval 592 to 1025 (ECEILDIIMK…QTVSRKVALG (434 aa)) is C-terminal globular domain. 2 consecutive VWFA domains span residues 614–802 (DILF…LKNI) and 826–1018 (DITI…YQTV). Asparagine 801 and asparagine 893 each carry an N-linked (GlcNAc...) asparagine glycan.

It belongs to the type VI collagen family. Trimers composed of three different chains: alpha-1(VI), alpha-2(VI), and alpha-3(VI) or alpha-4(VI) or alpha-5(VI) or alpha-6(VI). Prolines at the third position of the tripeptide repeating unit (G-X-Y) are hydroxylated in some or all of the chains.

Its subcellular location is the secreted. The protein resides in the extracellular space. It is found in the extracellular matrix. Functionally, collagen VI acts as a cell-binding protein. This is Collagen alpha-1(VI) chain (Col6a1) from Mus musculus (Mouse).